The primary structure comprises 506 residues: Histidine ammonia-lyase (506 aa).

Positions 143 to 145 (ASG) form a cross-link, 5-imidazolinone (Ala-Gly). Ser144 carries the 2,3-didehydroalanine (Ser) modification.

Belongs to the PAL/histidase family. In terms of processing, contains an active site 4-methylidene-imidazol-5-one (MIO), which is formed autocatalytically by cyclization and dehydration of residues Ala-Ser-Gly.

The protein localises to the cytoplasm. The enzyme catalyses L-histidine = trans-urocanate + NH4(+). It participates in amino-acid degradation; L-histidine degradation into L-glutamate; N-formimidoyl-L-glutamate from L-histidine: step 1/3. The sequence is that of Histidine ammonia-lyase from Citrobacter koseri (strain ATCC BAA-895 / CDC 4225-83 / SGSC4696).